The primary structure comprises 435 residues: Transcription activator AKTR-2 (435 aa).

A DNA-binding region (zn(2)-C6 fungal-type) is located at residues 16-43 (CDFCTQSKLRCNKNKPSCRRCTIQQQVC). Residues 49–103 (RRTGRPPKHPRRADDSQETSGQHGHQDPMTSAPADSCEQQSSHLDLEGDDTDFTL) form a disordered region. Residues 50–59 (RTGRPPKHPR) show a composition bias toward basic residues.

The protein resides in the nucleus. Transcription factor that regulates the expression of the gene clusters that mediate the biosynthesis of the host-selective toxins (HSTs) AK-toxins responsible for Japanese pear black spot disease by the Japanese pear pathotype. AK-toxins are esters of 9,10-epoxy 8-hydroxy 9-methyldecatrienoic acid (EDA). On cellular level, AK-toxins affect plasma membrane of susceptible cells and cause a sudden increase in loss of K(+) after a few minutes of toxin treatment. This Alternaria alternata (Alternaria rot fungus) protein is Transcription activator AKTR-2.